Consider the following 334-residue polypeptide: D-aspartate oxidase 1 (334 aa).

Residues aspartate 35, arginine 36, serine 43, glycine 307, and threonine 312 each coordinate FAD. A Microbody targeting signal motif is present at residues 332 to 334 (SKL).

Belongs to the DAMOX/DASOX family. It depends on FAD as a cofactor. In terms of tissue distribution, expressed in the intestinal cells, hypodermis and in unidentified cells in the head in adult hermaphrodites.

It localises to the peroxisome matrix. It carries out the reaction D-aspartate + O2 + H2O = oxaloacetate + H2O2 + NH4(+). The catalysed reaction is D-glutamate + O2 + H2O = H2O2 + 2-oxoglutarate + NH4(+). Not inhibited by potassium bromide or thiolactomycin. Functionally, selectively catalyzes the oxidative deamination of acidic amino acids. May play a role in the egg-laying events and early development of the worm, in addition to quality control of the germ cells. This Caenorhabditis elegans protein is D-aspartate oxidase 1 (ddo-1).